Here is a 366-residue protein sequence, read N- to C-terminus: D-alanine--D-alanine ligase (366 aa).

The 210-residue stretch at 148–357 (KMTFEQAGLA…FPELVDRLIQ (210 aa)) folds into the ATP-grasp domain. 184–239 (EAALGYPAFVKPANLGSSVGIAKVRSRQELEAALDNAASYDRRLVVEAGVVAREVE) serves as a coordination point for ATP. Asp-310, Glu-324, and Asn-326 together coordinate Mg(2+).

The protein belongs to the D-alanine--D-alanine ligase family. The cofactor is Mg(2+). Mn(2+) serves as cofactor.

It localises to the cytoplasm. The enzyme catalyses 2 D-alanine + ATP = D-alanyl-D-alanine + ADP + phosphate + H(+). Its pathway is cell wall biogenesis; peptidoglycan biosynthesis. Its function is as follows. Cell wall formation. The protein is D-alanine--D-alanine ligase of Nostoc punctiforme (strain ATCC 29133 / PCC 73102).